The sequence spans 296 residues: Probable endonuclease 4 (296 aa).

Positions 68, 109, 144, 178, 181, 213, 226, 228, and 258 each coordinate Zn(2+).

This sequence belongs to the AP endonuclease 2 family. The cofactor is Zn(2+).

The catalysed reaction is Endonucleolytic cleavage to 5'-phosphooligonucleotide end-products.. In terms of biological role, endonuclease IV plays a role in DNA repair. It cleaves phosphodiester bonds at apurinic or apyrimidinic (AP) sites, generating a 3'-hydroxyl group and a 5'-terminal sugar phosphate. The chain is Probable endonuclease 4 from Staphylococcus saprophyticus subsp. saprophyticus (strain ATCC 15305 / DSM 20229 / NCIMB 8711 / NCTC 7292 / S-41).